We begin with the raw amino-acid sequence, 146 residues long: Leptin (146 aa).

A disulfide bridge links cysteine 96 with cysteine 146.

Belongs to the leptin family.

It localises to the secreted. Its function is as follows. Key player in the regulation of energy balance and body weight control. Once released into the circulation, has central and peripheral effects by binding LEPR, found in many tissues, which results in the activation of several major signaling pathways. In the hypothalamus, acts as an appetite-regulating factor that induces a decrease in food intake and an increase in energy consumption by inducing anorexinogenic factors and suppressing orexigenic neuropeptides, also regulates bone mass and secretion of hypothalamo-pituitary-adrenal hormones. In the periphery, increases basal metabolism, influences reproductive function, regulates pancreatic beta-cell function and insulin secretion, is pro-angiogenic for endothelial cell and affects innate and adaptive immunity. In the arcuate nucleus of the hypothalamus, activates by depolarization POMC neurons inducing FOS and SOCS3 expression to release anorexigenic peptides and inhibits by hyperpolarization NPY neurons inducing SOCS3 with a consequent reduction on release of orexigenic peptides. In addition to its known satiety inducing effect, has a modulatory role in nutrient absorption. In the intestine, reduces glucose absorption by enterocytes by activating PKC and leading to a sequential activation of p38, PI3K and ERK signaling pathways which exerts an inhibitory effect on glucose absorption. Acts as a growth factor on certain tissues, through the activation of different signaling pathways increases expression of genes involved in cell cycle regulation such as CCND1, via JAK2-STAT3 pathway, or VEGFA, via MAPK1/3 and PI3K-AKT1 pathways. May also play an apoptotic role via JAK2-STAT3 pathway and up-regulation of BIRC5 expression. Pro-angiogenic, has mitogenic activity on vascular endothelial cells and plays a role in matrix remodeling by regulating the expression of matrix metalloproteinases (MMPs) and tissue inhibitors of metalloproteinases (TIMPs). In innate immunity, modulates the activity and function of neutrophils by increasing chemotaxis and the secretion of oxygen radicals. Increases phagocytosis by macrophages and enhances secretion of pro-inflammatory mediators. Increases cytotoxic ability of NK cells. Plays a pro-inflammatory role, in synergy with IL1B, by inducing NOS2 which promotes the production of IL6, IL8 and Prostaglandin E2, through a signaling pathway that involves JAK2, PI3K, MAP2K1/MEK1 and MAPK14/p38. In adaptive immunity, promotes the switch of memory T-cells towards T helper-1 cell immune responses. Increases CD4(+)CD25(-) T-cell proliferation and reduces autophagy during TCR (T-cell receptor) stimulation, through MTOR signaling pathway activation and BCL2 up-regulation. This is Leptin (LEP) from Pan troglodytes (Chimpanzee).